The primary structure comprises 309 residues: Homoserine O-succinyltransferase (309 aa).

Cysteine 142 serves as the catalytic Acyl-thioester intermediate. Substrate contacts are provided by lysine 163 and serine 192. Catalysis depends on histidine 235, which acts as the Proton acceptor. The active site involves glutamate 237. Residue arginine 249 participates in substrate binding.

It belongs to the MetA family.

The protein resides in the cytoplasm. The enzyme catalyses L-homoserine + succinyl-CoA = O-succinyl-L-homoserine + CoA. The protein operates within amino-acid biosynthesis; L-methionine biosynthesis via de novo pathway; O-succinyl-L-homoserine from L-homoserine: step 1/1. Transfers a succinyl group from succinyl-CoA to L-homoserine, forming succinyl-L-homoserine. The chain is Homoserine O-succinyltransferase from Klebsiella pneumoniae subsp. pneumoniae (strain ATCC 700721 / MGH 78578).